A 271-amino-acid chain; its full sequence is Small ribosomal subunit protein uS2 (271 aa).

Over residues 229 to 242 the composition is skewed to basic and acidic residues; sequence KERKGKDAEEELKK. The interval 229-271 is disordered; sequence KERKGKDAEEELKKAAAPKAAPAAEAAPAAEAPAAPVVEAAAE. Low complexity predominate over residues 243–271; sequence AAAPKAAPAAEAAPAAEAPAAPVVEAAAE.

It belongs to the universal ribosomal protein uS2 family.

The polypeptide is Small ribosomal subunit protein uS2 (Nitratidesulfovibrio vulgaris (strain DSM 19637 / Miyazaki F) (Desulfovibrio vulgaris)).